Consider the following 615-residue polypeptide: Leucine aminopeptidase 2-1 (615 aa).

Substrate is bound by residues 137–139 (QCQ) and 261–266 (PYGGME). Histidine 290 contacts Zn(2+). Glutamate 291 (proton acceptor) is an active-site residue. Residues histidine 294 and glutamate 313 each contribute to the Zn(2+) site. Tyrosine 380 acts as the Proton donor in catalysis.

This sequence belongs to the peptidase M1 family. Requires Zn(2+) as cofactor.

Its subcellular location is the cytoplasm. The protein resides in the nucleus. The catalysed reaction is an epoxide + H2O = an ethanediol. Its function is as follows. Aminopeptidase that preferentially cleaves di- and tripeptides. Also has low epoxide hydrolase activity (in vitro). Can hydrolyze the epoxide leukotriene LTA(4) but it forms preferentially 5,6-dihydroxy-7,9,11,14-eicosatetraenoic acid rather than the cytokine leukotriene B(4) as the product compared to the homologous mammalian enzyme (in vitro). The protein is Leucine aminopeptidase 2-1 of Meyerozyma guilliermondii (strain ATCC 6260 / CBS 566 / DSM 6381 / JCM 1539 / NBRC 10279 / NRRL Y-324) (Yeast).